Consider the following 335-residue polypeptide: tRNA pseudouridine synthase D (335 aa).

Asp-77 serves as the catalytic Nucleophile. Positions 152 to 308 (GFPNYFTEQR…AQNLNWQFEP (157 aa)) constitute a TRUD domain.

Belongs to the pseudouridine synthase TruD family.

It catalyses the reaction uridine(13) in tRNA = pseudouridine(13) in tRNA. Functionally, responsible for synthesis of pseudouridine from uracil-13 in transfer RNAs. This Actinobacillus succinogenes (strain ATCC 55618 / DSM 22257 / CCUG 43843 / 130Z) protein is tRNA pseudouridine synthase D.